Reading from the N-terminus, the 766-residue chain is Phosphoribosylformylglycinamidine synthase subunit PurL (766 aa).

Histidine 66 is a catalytic residue. Tyrosine 69 and lysine 113 together coordinate ATP. A Mg(2+)-binding site is contributed by glutamate 115. Residues 116 to 119 (SHNH) and arginine 138 contribute to the substrate site. Catalysis depends on histidine 117, which acts as the Proton acceptor. Aspartate 139 contributes to the Mg(2+) binding site. Residue glutamine 264 participates in substrate binding. Residue aspartate 292 participates in Mg(2+) binding. Residue 336–338 (ESQ) coordinates substrate. ATP is bound by residues asparagine 524 and glycine 561. Mg(2+) is bound at residue asparagine 562. Serine 564 contributes to the substrate binding site.

The protein belongs to the FGAMS family. Monomer. Part of the FGAM synthase complex composed of 1 PurL, 1 PurQ and 2 PurS subunits.

It localises to the cytoplasm. The enzyme catalyses N(2)-formyl-N(1)-(5-phospho-beta-D-ribosyl)glycinamide + L-glutamine + ATP + H2O = 2-formamido-N(1)-(5-O-phospho-beta-D-ribosyl)acetamidine + L-glutamate + ADP + phosphate + H(+). It functions in the pathway purine metabolism; IMP biosynthesis via de novo pathway; 5-amino-1-(5-phospho-D-ribosyl)imidazole from N(2)-formyl-N(1)-(5-phospho-D-ribosyl)glycinamide: step 1/2. Functionally, part of the phosphoribosylformylglycinamidine synthase complex involved in the purines biosynthetic pathway. Catalyzes the ATP-dependent conversion of formylglycinamide ribonucleotide (FGAR) and glutamine to yield formylglycinamidine ribonucleotide (FGAM) and glutamate. The FGAM synthase complex is composed of three subunits. PurQ produces an ammonia molecule by converting glutamine to glutamate. PurL transfers the ammonia molecule to FGAR to form FGAM in an ATP-dependent manner. PurS interacts with PurQ and PurL and is thought to assist in the transfer of the ammonia molecule from PurQ to PurL. The chain is Phosphoribosylformylglycinamidine synthase subunit PurL from Mycobacterium bovis (strain BCG / Pasteur 1173P2).